The sequence spans 100 residues: Aspartyl/glutamyl-tRNA(Asn/Gln) amidotransferase subunit C (100 aa).

Belongs to the GatC family. In terms of assembly, heterotrimer of A, B and C subunits.

It catalyses the reaction L-glutamyl-tRNA(Gln) + L-glutamine + ATP + H2O = L-glutaminyl-tRNA(Gln) + L-glutamate + ADP + phosphate + H(+). The catalysed reaction is L-aspartyl-tRNA(Asn) + L-glutamine + ATP + H2O = L-asparaginyl-tRNA(Asn) + L-glutamate + ADP + phosphate + 2 H(+). Allows the formation of correctly charged Asn-tRNA(Asn) or Gln-tRNA(Gln) through the transamidation of misacylated Asp-tRNA(Asn) or Glu-tRNA(Gln) in organisms which lack either or both of asparaginyl-tRNA or glutaminyl-tRNA synthetases. The reaction takes place in the presence of glutamine and ATP through an activated phospho-Asp-tRNA(Asn) or phospho-Glu-tRNA(Gln). The protein is Aspartyl/glutamyl-tRNA(Asn/Gln) amidotransferase subunit C of Streptococcus pyogenes serotype M49 (strain NZ131).